A 957-amino-acid chain; its full sequence is Calsyntenin-3 (957 aa).

Residues 1 to 19 form the signal peptide; sequence MTPLLFPLLLASLLPSSSC. Residues 20 to 848 lie on the Extracellular side of the membrane; it reads NKANKHKPWI…SHRNSMVPSA (829 aa). Cadherin domains are found at residues 29-145 and 146-246; these read IEAE…APVF and VERL…KPSW. Residues Asn-299, Asn-347, and Asn-508 are each glycosylated (N-linked (GlcNAc...) asparagine). Residues 849 to 869 traverse the membrane as a helical segment; the sequence is ATLIIVVCVGFLVLMVVLGLV. The Cytoplasmic portion of the chain corresponds to 870-957; the sequence is RIHSLHRRVS…RIIETPPHRY (88 aa). Residues 919–957 form a disordered region; that stretch reads CVAGAAGGQQDDEDSSDSEAADSPSSDERRIIETPPHRY. A compositionally biased stretch (acidic residues) spans 928–938; sequence QDDEDSSDSEA. The span at 944–957 shows a compositional bias: basic and acidic residues; that stretch reads SDERRIIETPPHRY.

Belongs to the calsyntenin family. Interacts (via cadherin domains) with both alpha and beta isoforms of neurexins (NRXN1, NRXN2 and NRXN3). Directly interacts with APBA2. Forms a tripartite complex with APBA2 and APP. Interacts with low affinity with KLC1. Interacts with SLC23A2/SVCT2. Post-translationally, proteolytically processed under normal cellular conditions. A primary zeta-cleavage generates a large extracellular (soluble) N-terminal domain (sAlc) and a short C-terminal transmembrane fragment (CTF1). A secondary cleavage catalyzed by gamma-secretase within the transmembrane domain releases the beta-Alc-beta chain in the extracellular milieu and produces an intracellular fragment (AlcICD). This processing is strongly suppressed in the tripartite complex formed with APBA2 and APP, which seems to prevent the association with gamma-secretase.

The protein localises to the postsynaptic cell membrane. It localises to the endoplasmic reticulum membrane. It is found in the golgi apparatus membrane. The protein resides in the cell projection. Its subcellular location is the dendrite. Functionally, postsynaptic adhesion molecule that binds to presynaptic neurexins to mediate both excitatory and inhibitory synapse formation. Promotes synapse development by acting as a cell adhesion molecule at the postsynaptic membrane, which associates with both neurexin-alpha and neurexin-beta proteins at the presynaptic membrane. Regulates the balance between excitatory and inhibitory synapses by inhibiting formation of excitatory parallel-fiber synapses and promoting formation of inhibitory synapses in the same neuron. May also be involved in ascorbate (vitamin C) uptake via its interaction with SLC23A2/SVCT2. Complex formation with APBA2 and APP, stabilizes APP metabolism and enhances APBA2-mediated suppression of beta-APP40 secretion, due to the retardation of intracellular APP maturation. This chain is Calsyntenin-3 (CLSTN3), found in Bos taurus (Bovine).